Here is a 99-residue protein sequence, read N- to C-terminus: Small ribosomal subunit protein bS20 (99 aa).

The protein belongs to the bacterial ribosomal protein bS20 family.

Binds directly to 16S ribosomal RNA. This Picosynechococcus sp. (strain ATCC 27264 / PCC 7002 / PR-6) (Agmenellum quadruplicatum) protein is Small ribosomal subunit protein bS20.